The chain runs to 243 residues: Probable phosphatase CLD_1129 (243 aa).

Residues His8, His10, His16, His41, Glu74, His102, His132, Asp192, and His194 each contribute to the Zn(2+) site.

It belongs to the PHP family. Zn(2+) serves as cofactor.

This chain is Probable phosphatase CLD_1129, found in Clostridium botulinum (strain Okra / Type B1).